The chain runs to 374 residues: MRSNLAPYAVSDTNSRGRRIHEELPAGRSQFQRDRDRVIHSTAFRRLEYKTQVFVNHEGDLFRTRLTHSLEVAQIGRSIARNLNLNEELVEAITLSHDLGHTPFGHAGQDALNDCMKTYGGFEHNLQSLRVVDVLEERYATFNGLNLCFETREGILKRVPKSKAAALDELGTRFLHGHSASLEAQLANLADEIAYNNHDVDDGLRSGLITLAQLEEIEIFARHLHQVKQHYPDITGRRLIHETVRGMINTLVVDLTVQSGTRIRDASPDSPDSVREKPVLIGFSDTIKRQQQELKRFLHKNLYKHYQVMRMSNKARHTIEKLFTTFETEPALLPYEYQQKFQEYGHQAIADYIAGMTDRYAIREYQRLFAITEN.

Positions 65 to 196 (RLTHSLEVAQ…ANLADEIAYN (132 aa)) constitute an HD domain.

It belongs to the dGTPase family. Type 2 subfamily.

The protein is Deoxyguanosinetriphosphate triphosphohydrolase-like protein (dgt) of Nitrosomonas europaea (strain ATCC 19718 / CIP 103999 / KCTC 2705 / NBRC 14298).